Here is a 272-residue protein sequence, read N- to C-terminus: HMP-PP phosphatase (272 aa).

D8 serves as the catalytic Nucleophile. Mg(2+)-binding residues include D8, D10, and D212.

The protein belongs to the HAD-like hydrolase superfamily. Cof family. Mg(2+) serves as cofactor.

The enzyme catalyses 4-amino-2-methyl-5-(diphosphooxymethyl)pyrimidine + H2O = 4-amino-2-methyl-5-(phosphooxymethyl)pyrimidine + phosphate + H(+). Catalyzes the hydrolysis of 4-amino-2-methyl-5-hydroxymethylpyrimidine pyrophosphate (HMP-PP) to 4-amino-2-methyl-5-hydroxymethylpyrimidine phosphate (HMP-P). This chain is HMP-PP phosphatase, found in Escherichia fergusonii (strain ATCC 35469 / DSM 13698 / CCUG 18766 / IAM 14443 / JCM 21226 / LMG 7866 / NBRC 102419 / NCTC 12128 / CDC 0568-73).